We begin with the raw amino-acid sequence, 120 residues long: uncharacterized protein (120 aa).

To M.jannaschii MJ1503.

This is an uncharacterized protein from Methanocaldococcus jannaschii (strain ATCC 43067 / DSM 2661 / JAL-1 / JCM 10045 / NBRC 100440) (Methanococcus jannaschii).